The following is a 1385-amino-acid chain: DNA-directed RNA polymerase subunit beta (1385 aa).

It belongs to the RNA polymerase beta chain family. The RNAP catalytic core consists of 2 alpha, 1 beta, 1 beta' and 1 omega subunit. When a sigma factor is associated with the core the holoenzyme is formed, which can initiate transcription.

It catalyses the reaction RNA(n) + a ribonucleoside 5'-triphosphate = RNA(n+1) + diphosphate. Its function is as follows. DNA-dependent RNA polymerase catalyzes the transcription of DNA into RNA using the four ribonucleoside triphosphates as substrates. The chain is DNA-directed RNA polymerase subunit beta from Sulfurovum sp. (strain NBC37-1).